The primary structure comprises 328 residues: uncharacterized protein (328 aa).

The SIS domain occupies 37 to 179 (LTERLLCHQG…AMTVLRCRKI (143 aa)). 52-57 (GIGKSG) lines the ATP pocket. CBS domains are found at residues 205–264 (LSPR…GGAI) and 273–328 (MTRK…AGLL).

This sequence belongs to the SIS family. GutQ/KpsF subfamily.

This is an uncharacterized protein from Chlamydia muridarum (strain MoPn / Nigg).